The primary structure comprises 316 residues: tRNA uridine(34) hydroxylase (316 aa).

The 95-residue stretch at 123–217 (LDEDTVVIDA…YGKNPETRGE (95 aa)) folds into the Rhodanese domain. The active-site Cysteine persulfide intermediate is the C177.

This sequence belongs to the TrhO family.

The catalysed reaction is uridine(34) in tRNA + AH2 + O2 = 5-hydroxyuridine(34) in tRNA + A + H2O. Its function is as follows. Catalyzes oxygen-dependent 5-hydroxyuridine (ho5U) modification at position 34 in tRNAs. The sequence is that of tRNA uridine(34) hydroxylase from Enterococcus faecalis (strain ATCC 700802 / V583).